Here is a 210-residue protein sequence, read N- to C-terminus: Cytidylate kinase (210 aa).

Position 7-15 (7-15) interacts with ATP; it reads GPAASGKGT.

The protein belongs to the cytidylate kinase family. Type 1 subfamily.

The protein resides in the cytoplasm. The catalysed reaction is CMP + ATP = CDP + ADP. It catalyses the reaction dCMP + ATP = dCDP + ADP. The chain is Cytidylate kinase from Methylobacterium sp. (strain 4-46).